The following is a 462-amino-acid chain: Bifunctional protein GlmU (462 aa).

Residues 1–235 (MSYINFSAII…TFEIMGVNSK (235 aa)) form a pyrophosphorylase region. Residues 11-14 (LAAG), Lys25, Gln80, 85-86 (GT), 107-109 (YGD), Gly144, Glu159, and Asn233 each bind UDP-N-acetyl-alpha-D-glucosamine. Asp109 is a binding site for Mg(2+). Mg(2+) is bound at residue Asn233. The linker stretch occupies residues 236–256 (SDFVDLDKQYQQRKVQCLLSS). The tract at residues 257–462 (GLMIIDPNRF…LNWKRLKNKK (206 aa)) is N-acetyltransferase. 2 residues coordinate UDP-N-acetyl-alpha-D-glucosamine: Arg339 and Lys357. His369 serves as the catalytic Proton acceptor. Residues Tyr372 and Asn383 each contribute to the UDP-N-acetyl-alpha-D-glucosamine site. Residues Ala386, 392–393 (NY), Ala429, and Arg446 contribute to the acetyl-CoA site.

The protein in the N-terminal section; belongs to the N-acetylglucosamine-1-phosphate uridyltransferase family. It in the C-terminal section; belongs to the transferase hexapeptide repeat family. Homotrimer. Requires Mg(2+) as cofactor.

The protein resides in the cytoplasm. It catalyses the reaction alpha-D-glucosamine 1-phosphate + acetyl-CoA = N-acetyl-alpha-D-glucosamine 1-phosphate + CoA + H(+). It carries out the reaction N-acetyl-alpha-D-glucosamine 1-phosphate + UTP + H(+) = UDP-N-acetyl-alpha-D-glucosamine + diphosphate. Its pathway is nucleotide-sugar biosynthesis; UDP-N-acetyl-alpha-D-glucosamine biosynthesis; N-acetyl-alpha-D-glucosamine 1-phosphate from alpha-D-glucosamine 6-phosphate (route II): step 2/2. It participates in nucleotide-sugar biosynthesis; UDP-N-acetyl-alpha-D-glucosamine biosynthesis; UDP-N-acetyl-alpha-D-glucosamine from N-acetyl-alpha-D-glucosamine 1-phosphate: step 1/1. It functions in the pathway bacterial outer membrane biogenesis; LPS lipid A biosynthesis. Its function is as follows. Catalyzes the last two sequential reactions in the de novo biosynthetic pathway for UDP-N-acetylglucosamine (UDP-GlcNAc). The C-terminal domain catalyzes the transfer of acetyl group from acetyl coenzyme A to glucosamine-1-phosphate (GlcN-1-P) to produce N-acetylglucosamine-1-phosphate (GlcNAc-1-P), which is converted into UDP-GlcNAc by the transfer of uridine 5-monophosphate (from uridine 5-triphosphate), a reaction catalyzed by the N-terminal domain. This chain is Bifunctional protein GlmU, found in Blochmanniella pennsylvanica (strain BPEN).